A 318-amino-acid polypeptide reads, in one-letter code: uncharacterized protein (318 aa).

The stretch at 67 to 157 forms a coiled coil; sequence LAFDELEKEK…SLKAIQTSQE (91 aa). Residues 172-318 are disordered; that stretch reads ESTNKVEKNA…KGFFARLFNL (147 aa). 2 stretches are compositionally biased toward basic and acidic residues: residues 175–193 and 219–236; these read NKVE…KDSK and KVDK…EKAS. A compositionally biased stretch (polar residues) spans 237 to 248; that stretch reads VEQSKNENAAET. Basic and acidic residues-rich tracts occupy residues 249–274 and 300–310; these read SNKE…HAEA and SEPKPQEEKKG.

This is an uncharacterized protein from Staphylococcus aureus (strain Mu50 / ATCC 700699).